Here is an 890-residue protein sequence, read N- to C-terminus: Phosphotransferase RcsD (890 aa).

Over 1 to 21 the chain is Cytoplasmic; the sequence is MRQKETTATTRFSLLPGSITR. The chain crosses the membrane as a helical span at residues 22–42; the sequence is FFLLLIIVLLVTMGVMVQSAV. The Periplasmic portion of the chain corresponds to 43-308; it reads NAWLKDKSYQ…GTLLLDTLQN (266 aa). A helical membrane pass occupies residues 309–329; it reads ILLPLLLNIGLLALALFGYTT. The Cytoplasmic segment spans residues 330 to 890; it reads FRHFSSRSTE…DIDSYVKSLL (561 aa). The segment at 468-678 is histidine-like kinase; it reads NIGDALKEPA…RYSVHIKMLA (211 aa). Residues 803–890 enclose the HPt domain; that stretch reads AQLHASGYYA…DIDSYVKSLL (88 aa). H842 carries the phosphohistidine modification.

It belongs to the RcsD family. Interacts with RcsC and RcsB. Has a higher affinity for RcsB than for RcsC. Post-translationally, phosphorylated by RcsC.

It localises to the cell inner membrane. Functionally, component of the Rcs signaling system, which controls transcription of numerous genes. RcsD is a phosphotransfer intermediate between the sensor kinase RcsC and the response regulator RcsB. It acquires a phosphoryl group from RcsC and transfers it to RcsB. The system controls expression of genes involved in colanic acid capsule synthesis, biofilm formation and cell division. The polypeptide is Phosphotransferase RcsD (Escherichia coli (strain K12)).